The chain runs to 960 residues: Dynamin-like GTPase OPA1, mitochondrial (960 aa).

The N-terminal 87 residues, 1–87 (MWRAGRAALA…TKYGYQPRRN (87 aa)), are a transit peptide targeting the mitochondrion. Residues 88-96 (FWPARLAAR) lie on the Mitochondrial matrix side of the membrane. The helical transmembrane segment at 97–113 (LLKLRYIILGSAVGGGY) threads the bilayer. Residues 114–770 (TAKKTFDEWK…NAIENMIGPD (657 aa)) are Mitochondrial intermembrane-facing. Residues 210–254 (SDKEKIDQLQEELLHTQLKYQRILERLEKENKELRKLVLQKDDKG) are a coiled coil. The LQQQIQ motif signature appears at 217 to 222 (QLQEEL). N6-acetyllysine is present on Lys-228. Positions 234-239 (ERLEKE) match the LQQQIQ motif motif. Residues 285 to 561 (QDHLPRVVVV…FWKMVRESVE (277 aa)) form the Dynamin-type G domain. The interval 295-302 (GDQSAGKT) is G1 motif. Residues Ser-298, Gly-300, Lys-301, Thr-302, Ser-303, and Gly-317 each contribute to the GTP site. Thr-302 lines the Mg(2+) pocket. Residues 321–324 (MMTR) are G2 motif. 2 residues coordinate Mg(2+): Thr-323 and Asp-398. The tract at residues 398-401 (DLPG) is G3 motif. The G4 motif stretch occupies residues 467–470 (TKVD). 3 residues coordinate GTP: Lys-468, Asp-470, and Thr-503. Residues 501–504 (VVTG) form a G5 motif region. Stalk region stretches follow at residues 589–836 (DRNE…IKDT) and 874–928 (CNDV…VKLL). The tract at residues 736–856 (SDKQQWDAAI…KTALNHCNLC (121 aa)) is paddle region. An intramembrane segment occupies 771–781 (WKKRWIYWKNR). At 782 to 960 (TQEQCVHNET…AFIEALHQEK (179 aa)) the chain is on the mitochondrial intermembrane side. A disulfide bridge connects residues Cys-856 and Cys-874. Residues 895-960 (RQQLTNTEVR…AFIEALHQEK (66 aa)) are a coiled coil.

Belongs to the TRAFAC class dynamin-like GTPase superfamily. Dynamin/Fzo/YdjA family. As to quaternary structure, oligomeric complex consisting of membrane-bound and soluble forms of OPA1. Interacts with RCC1L; RCC1L acts as a guanine nucleotide exchange factor (GEF) for OPA1 by exchanging bound GDP for free GTP. Interacts with CHCHD3 and IMMT; these interactions occur preferentially with soluble OPA1 forms. Interacts with PRELID1. Post-translationally, cleaved by OMA1 or YME1L downstream of the transmembrane region in response to different signals to generate soluble forms. Cleaved by OMA1 at position S1 following stress conditions, generating the short soluble form (Dynamin-like GTPase OPA1, short form; S-OPA1). AFG3L2 is involved in the regulation of OMA1-dependent processing of OPA1. PARL-dependent proteolytic processing releases an antiapoptotic soluble form not required for mitochondrial fusion. In terms of processing, cleavage at position S2 by YME1L is required to mediate oxidative phosphorylation (OXPHOS)-induced mitochondrial fusion. Cleavage occurs in the sequence motif Leu-Gln-Gln-Gln-Ile-Gln (LQQQIQ). As to expression, expressed in brain as well as retinal ganglion, starbust amacrine and horizontal cells of the retina. Absent from nerve fibers and photoreceptor cells of the retina.

It localises to the mitochondrion inner membrane. The protein resides in the mitochondrion intermembrane space. The catalysed reaction is GTP + H2O = GDP + phosphate + H(+). With respect to regulation, activated by guanine nucleotide exchange factor RCC1L. Dynamin-related GTPase that is essential for normal mitochondrial morphology by mediating fusion of the mitochondrial inner membranes, regulating cristae morphology and maintaining respiratory chain function. Exists in two forms: the transmembrane, long form (Dynamin-like GTPase OPA1, long form; L-OPA1), which is tethered to the inner mitochondrial membrane, and the short soluble form (Dynamin-like GTPase OPA1, short form; S-OPA1), which results from proteolytic cleavage and localizes in the intermembrane space. Both forms (L-OPA1 and S-OPA1) cooperate to catalyze the fusion of the mitochondrial inner membrane. The equilibrium between L-OPA1 and S-OPA1 is essential: excess levels of S-OPA1, produced by cleavage by OMA1 following loss of mitochondrial membrane potential, lead to an impaired equilibrium between L-OPA1 and S-OPA1, inhibiting mitochondrial fusion. The balance between L-OPA1 and S-OPA1 also influences cristae shape and morphology. Involved in remodeling cristae and the release of cytochrome c during apoptosis. Proteolytic processing by PARL in response to intrinsic apoptotic signals may lead to disassembly of OPA1 oligomers and release of the caspase activator cytochrome C (CYCS) into the mitochondrial intermembrane space. Acts as a regulator of T-helper Th17 cells, which are characterized by cells with fused mitochondria with tight cristae, by mediating mitochondrial membrane remodeling: OPA1 is required for interleukin-17 (IL-17) production. Its role in mitochondrial morphology is required for mitochondrial genome maintenance. In terms of biological role, constitutes the transmembrane long form (L-OPA1) that plays a central role in mitochondrial inner membrane fusion and cristae morphology. L-OPA1 and the soluble short form (S-OPA1) form higher-order helical assemblies that coordinate the fusion of mitochondrial inner membranes. Inner membrane-anchored L-OPA1 molecules initiate membrane remodeling by recruiting soluble S-OPA1 to rapidly polymerize into a flexible cylindrical scaffold encaging the mitochondrial inner membrane. Once at the membrane surface, the formation of S-OPA1 helices induce bilayer curvature. OPA1 dimerization through the paddle region, which inserts into cardiolipin-containing membrane, promotes GTP hydrolysis and the helical assembly of a flexible OPA1 lattice on the membrane, which drives membrane curvature and mitochondrial fusion. Plays a role in the maintenance and remodeling of mitochondrial cristae, some invaginations of the mitochondrial inner membrane that provide an increase in the surface area. Probably acts by forming helical filaments at the inside of inner membrane tubes with the shape and dimensions of crista junctions. The equilibrium between L-OPA1 and S-OPA1 influences cristae shape and morphology: increased L-OPA1 levels promote cristae stacking and elongated mitochondria, while increased S-OPA1 levels correlated with irregular cristae packing and round mitochondria shape. Functionally, constitutes the soluble short form (S-OPA1) generated by cleavage by OMA1, which plays a central role in mitochondrial inner membrane fusion and cristae morphology. The transmembrane long form (L-OPA1) and the S-OPA1 form higher-order helical assemblies that coordinate the fusion of mitochondrial inner membranes. Inner membrane-anchored L-OPA1 molecules initiate membrane remodeling by recruiting soluble S-OPA1 to rapidly polymerize into a flexible cylindrical scaffold encaging the mitochondrial inner membrane. Once at the membrane surface, the formation of S-OPA1 helices induce bilayer curvature. OPA1 dimerization through the paddle region, which inserts into cardiolipin-containing membrane, promotes GTP hydrolysis and the helical assembly of a flexible OPA1 lattice on the membrane, which drives membrane curvature and mitochondrial fusion. Excess levels of S-OPA1 produced by cleavage by OMA1 following stress conditions that induce loss of mitochondrial membrane potential, lead to an impaired equilibrium between L-OPA1 and S-OPA1, thereby inhibiting mitochondrial fusion. Involved in mitochondrial safeguard in response to transient mitochondrial membrane depolarization by mediating flickering: cleavage by OMA1 leads to excess production of S-OPA1, preventing mitochondrial hyperfusion. Plays a role in the maintenance and remodeling of mitochondrial cristae, some invaginations of the mitochondrial inner membrane that provide an increase in the surface area. Probably acts by forming helical filaments at the inside of inner membrane tubes with the shape and dimensions of crista junctions. The equilibrium between L-OPA1 and S-OPA1 influences cristae shape and morphology: increased L-OPA1 levels promote cristae stacking and elongated mitochondria, while increased S-OPA1 levels correlated with irregular cristae packing and round mitochondria shape. Its function is as follows. Isoforms that contain the alternative exon 4b are required for mitochondrial genome maintenance, possibly by anchoring the mitochondrial nucleoids to the inner mitochondrial membrane. The polypeptide is Dynamin-like GTPase OPA1, mitochondrial (Rattus norvegicus (Rat)).